Reading from the N-terminus, the 445-residue chain is StAR-related lipid transfer protein 3 (445 aa).

Topologically, residues 1–51 (MSKLPGELARDLECSLPAVASLGSSLSHSQSLSSHLLPPPEKRRAISDVRR) are cytoplasmic. The MENTAL domain occupies 46–217 (ISDVRRTFCL…YSPPESFAGS (172 aa)). Residues 52 to 72 (TFCLFVTFDLLFISLLWIIEL) form a helical membrane-spanning segment. The Extracellular portion of the chain corresponds to 73–94 (NTNTGIRKNLEQEIIQYNFKTS). The chain crosses the membrane as a helical span at residues 95–115 (FFDIFVLAFFRFSGLLLGYAV). Topologically, residues 116-120 (LRLQH) are cytoplasmic. Residues 121–141 (WWVIAVTTLVSSAFLIVKVIL) form a helical membrane-spanning segment. The Extracellular portion of the chain corresponds to 142 to 148 (SELLSKG). A helical transmembrane segment spans residues 149–169 (AFGYLLPIVSFVLAWLETWFL). The Cytoplasmic segment spans residues 170 to 445 (DFKVLPQEAE…QRISELGARA (276 aa)). Short sequence motifs (FFAT) lie at residues 206 to 212 (QFYSPPE) and 207 to 212 (FYSPPE). S209, S217, and S221 each carry phosphoserine. The START domain occupies 248–443 (VVDQILAQEE…LRQRISELGA (196 aa)).

This sequence belongs to the STARD3 family. As to quaternary structure, homodimer. Interacts (via the MENTAL domain) with STARD3NL. Interacts (via phosphorylated FFAT motif) with VAPA (via MSP domain). Interacts (via phosphorylated FFAT motif) with VAPB (via MSP domain). Interacts (via phosphorylated FFAT motif) with MOSPD2 (via MSP domain); this interaction allows enrichment of MOSPD2 around endosomes. Post-translationally, phosphorylation at Ser-209 is necessary and sufficient for the direct interaction of the phosphorylated FFAT motif with the MSP domain of MOSPD2, VAPA and VAPB and allows the tethering of two membranes that participates in the formation of ER-endosome contacts. Phosphorylation of the FFAT motif leads to conformation changes. Additional phosphorylations around the core FFAT motif (QFYSPPE) are not essential but strengthen the interaction with MOSPD2, VAPA and VAPB. Phosphorylation at Ser-209 of FFAT motif drives membrane tethering between the endoplasmic reticulum and late endosomes via interaction with VAPA and VAPB that in turn allows the efficient transport of sterol mediated by the START domain. As to expression, present in retina. Localizes to all neurons of macular retina and especially cone inner segments and axons (at protein level).

Its subcellular location is the late endosome membrane. The catalysed reaction is cholesterol(in) = cholesterol(out). Its function is as follows. Sterol-binding protein that mediates cholesterol transport from the endoplasmic reticulum to endosomes. The sterol transport mechanism is triggered by phosphorylation of FFAT motif that leads to membrane tethering between the endoplasmic reticulum and late endosomes via interaction with VAPA and VAPB. Acts as a lipid transfer protein that redirects sterol to the endosome at the expense of the cell membrane and favors membrane formation inside endosomes. May also mediate cholesterol transport between other membranes, such as mitochondria membrane or cell membrane. However, such results need additional experimental evidences; probably mainly mediates cholesterol transport from the endoplasmic reticulum to endosomes. Does not activate transcriptional cholesterol sensing. Able to bind other lipids, such as lutein, a xanthophyll carotenoids that form the macular pigment of the retina. Able to bind other lipids, such as lutein, a xanthophyll carotenoids that form the macular pigment of the retina. The polypeptide is StAR-related lipid transfer protein 3 (Macaca mulatta (Rhesus macaque)).